The following is a 224-amino-acid chain: Large ribosomal subunit protein uL3 (224 aa).

Position 158 is an N5-methylglutamine (Gln-158).

The protein belongs to the universal ribosomal protein uL3 family. As to quaternary structure, part of the 50S ribosomal subunit. Forms a cluster with proteins L14 and L19. Methylated by PrmB.

Functionally, one of the primary rRNA binding proteins, it binds directly near the 3'-end of the 23S rRNA, where it nucleates assembly of the 50S subunit. In Paracidovorax citrulli (strain AAC00-1) (Acidovorax citrulli), this protein is Large ribosomal subunit protein uL3.